We begin with the raw amino-acid sequence, 703 residues long: Calcium-responsive transcription factor (703 aa).

Disordered stretches follow at residues 1–61 (MEQS…QNIP), 130–150 (GPLV…SDRN), and 517–539 (GNSQ…SLSP). The span at 9–22 (KVNHNDSEESKTDS) shows a compositional bias: basic and acidic residues. Positions 23–34 (QHLTYMDSSEPS) are enriched in polar residues.

It is found in the nucleus. Its function is as follows. Acts as a transcriptional activator that mediates the calcium- and neuron-selective induction of BDNF exon III transcription. Binds to the consensus calcium-response element CaRE1 5'-CTATTTCGAG-3' sequence. In Bos taurus (Bovine), this protein is Calcium-responsive transcription factor (CARF).